The sequence spans 249 residues: Triosephosphate isomerase (249 aa).

Asn9–Lys11 is a binding site for substrate. Catalysis depends on His95, which acts as the Electrophile. Residue Glu167 is the Proton acceptor of the active site. Residues Gly173, Ser213, and Gly234–Gly235 contribute to the substrate site.

This sequence belongs to the triosephosphate isomerase family. In terms of assembly, homodimer.

Its subcellular location is the cytoplasm. It carries out the reaction D-glyceraldehyde 3-phosphate = dihydroxyacetone phosphate. It functions in the pathway carbohydrate biosynthesis; gluconeogenesis. Its pathway is carbohydrate degradation; glycolysis; D-glyceraldehyde 3-phosphate from glycerone phosphate: step 1/1. Its function is as follows. Involved in the gluconeogenesis. Catalyzes stereospecifically the conversion of dihydroxyacetone phosphate (DHAP) to D-glyceraldehyde-3-phosphate (G3P). This is Triosephosphate isomerase from Dictyoglomus turgidum (strain DSM 6724 / Z-1310).